We begin with the raw amino-acid sequence, 521 residues long: Ribonuclease Y (521 aa).

Residues 1–21 (MFFIEHPFVYLGLDLIVGCLI) traverse the membrane as a helical segment. The 61-residue stretch at 211–271 (TVSMVPLPSD…VRREVARLAL (61 aa)) folds into the KH domain. The region spanning 337–430 (VLQHSLEVAF…VQAADALSGA (94 aa)) is the HD domain.

The protein belongs to the RNase Y family.

It is found in the cell membrane. Its function is as follows. Endoribonuclease that initiates mRNA decay. This chain is Ribonuclease Y, found in Desulfotalea psychrophila (strain LSv54 / DSM 12343).